Consider the following 365-residue polypeptide: 7-methylxanthine methyltransferase PCS1 (365 aa).

Position 19 (Y19) interacts with S-adenosyl-L-homocysteine. Caffeine is bound at residue T26. S-adenosyl-L-homocysteine-binding residues include C62, N67, D99, L100, S134, and F135. 3 residues coordinate caffeine: Y152, H155, and W156. N173 provides a ligand contact to Mg(2+). Residue H221 coordinates caffeine. Mg(2+) contacts are provided by D259, F261, and N262. F317 contributes to the caffeine binding site.

This sequence belongs to the methyltransferase superfamily. Type-7 methyltransferase family. It depends on Mg(2+) as a cofactor.

The catalysed reaction is 1,7-dimethylxanthine + S-adenosyl-L-methionine = caffeine + S-adenosyl-L-homocysteine + H(+). It carries out the reaction 7-methylxanthine + S-adenosyl-L-methionine = theobromine + S-adenosyl-L-homocysteine + H(+). Its pathway is alkaloid biosynthesis. Functionally, involved in the biosynthesis of caffeine. Catalyzes the conversion of 7-methylxanthine (7mX) to theobromine, and, to some extent, the conversion of paraxanthine to caffeine, but seems not able to convert theobromine to caffeine. The sequence is that of 7-methylxanthine methyltransferase PCS1 from Camellia ptilophylla (Cocoa tea).